Reading from the N-terminus, the 496-residue chain is Polyamine oxidase 6 (496 aa).

The N-terminal stretch at 1–27 (MTKPTTMAIFLVLALSIAQLLPSLVAG) is a signal peptide. Residues Glu61 and Arg69 each coordinate FAD. Asn103 and Asn150 each carry an N-linked (GlcNAc...) asparagine glycan. FAD is bound at residue Val261. Asn278 carries N-linked (GlcNAc...) asparagine glycosylation. Residue Glu454 coordinates FAD.

Belongs to the flavin monoamine oxidase family. It depends on FAD as a cofactor.

The protein localises to the secreted. It localises to the extracellular space. It is found in the apoplast. It participates in amine and polyamine degradation; spermine degradation. Functionally, flavoenzyme involved in polyamine back-conversion. Catalyzes the oxidation of the secondary amino group of polyamines, such as spermine and spermidine. The chain is Polyamine oxidase 6 from Oryza sativa subsp. japonica (Rice).